The primary structure comprises 142 residues: Hemoglobin subunit alpha-1 (142 aa).

Positions 2 to 142 (LLSADDKKHI…VSTVLTSKYR (141 aa)) constitute a Globin domain. Residue histidine 59 participates in O2 binding. Histidine 88 is a binding site for heme b.

It belongs to the globin family. In terms of assembly, heterotetramer of two alpha chains and two beta chains. In terms of tissue distribution, red blood cells.

Involved in oxygen transport from the lung to the various peripheral tissues. The sequence is that of Hemoglobin subunit alpha-1 (hba1) from Xenopus laevis (African clawed frog).